A 118-amino-acid polypeptide reads, in one-letter code: MASQSQGIQQLLQAEKRAAEKVADARKRKARRLKQAKEEAQMEVEQYRREREQEFQSKQQAAMGSQGNLSAEVEQATRRQVQGMQSSQQRNRERVLAQLLGMVCDVRPQVHPNYRIAA.

Residues R26 to R90 are disordered. Positions Q35–F55 are enriched in basic and acidic residues. Composition is skewed to polar residues over residues Q56–L69 and R78–Q89.

This sequence belongs to the V-ATPase G subunit family. As to quaternary structure, V-ATPase is a heteromultimeric enzyme made up of two complexes: the ATP-hydrolytic V1 complex and the proton translocation V0 complex. The V1 complex consists of three catalytic AB heterodimers that form a heterohexamer, three peripheral stalks each consisting of EG heterodimers, one central rotor including subunits D and F, and the regulatory subunits C and H. The proton translocation complex V0 consists of the proton transport subunit a, a ring of proteolipid subunits c9c'', rotary subunit d, subunits e and f, and the accessory subunits ATP6AP1/Ac45 and ATP6AP2/PRR.

It is found in the melanosome. The protein resides in the cytoplasmic vesicle. It localises to the clathrin-coated vesicle membrane. Subunit of the V1 complex of vacuolar(H+)-ATPase (V-ATPase), a multisubunit enzyme composed of a peripheral complex (V1) that hydrolyzes ATP and a membrane integral complex (V0) that translocates protons. V-ATPase is responsible for acidifying and maintaining the pH of intracellular compartments and in some cell types, is targeted to the plasma membrane, where it is responsible for acidifying the extracellular environment. The chain is V-type proton ATPase subunit G 2 (ATP6V1G2) from Sus scrofa (Pig).